The chain runs to 595 residues: Probable carotenoid cleavage dioxygenase 4, chloroplastic (595 aa).

The N-terminal 34 residues, 1–34 (MDSVSSSSFLSSTFSLHHSLLRRRSSSPTLLRIN), are a transit peptide targeting the chloroplast. The segment at 41-74 (RSPITNPSDNNDRRNKPKTLHNRTNHTLVSSPPK) is disordered. The segment covering 55-64 (NKPKTLHNRT) has biased composition (basic residues). Fe cation is bound by residues His-287, His-336, His-404, and His-583.

This sequence belongs to the carotenoid oxygenase family. Interacts with VAR3. Interacts with PGM48. Fe(2+) is required as a cofactor. Mostly expressed in flowers (e.g. sepals and petals), siliques, seeds, leaves and cotyledons.

The protein localises to the plastid. It localises to the chloroplast. Its subcellular location is the plastoglobule. Its function is as follows. May be involved in carotenoid cleavage. In Arabidopsis thaliana (Mouse-ear cress), this protein is Probable carotenoid cleavage dioxygenase 4, chloroplastic (CCD4).